The following is a 140-amino-acid chain: Large ribosomal subunit protein uL16 (140 aa).

It belongs to the universal ribosomal protein uL16 family. Part of the 50S ribosomal subunit.

Its function is as follows. Binds 23S rRNA and is also seen to make contacts with the A and possibly P site tRNAs. In Onion yellows phytoplasma (strain OY-M), this protein is Large ribosomal subunit protein uL16.